A 239-amino-acid polypeptide reads, in one-letter code: Cysteine-rich venom protein (239 aa).

An N-terminal signal peptide occupies residues 1–19 (MIAFLVLPILAAVLQQSSG). An SCP domain is found at 39-166 (DLHNSLRRSV…EYKYFYVCQY (128 aa)). Disulfide bonds link C75/C153, C92/C167, C148/C164, C186/C193, C189/C198, C202/C234, C211/C228, and C219/C232. A ShKT domain is found at 202–234 (CTHEDKFTNCKDLVKQGCNNNYLKTNCPASCSC).

It belongs to the CRISP family. As to expression, expressed by the venom gland.

It localises to the secreted. In terms of biological role, blocks contraction of smooth muscle elicited by high potassium-induced depolarization, but does not block caffeine-stimulated contraction. May target voltage-gated calcium channels in smooth muscle. This chain is Cysteine-rich venom protein, found in Vipera berus (Common European adder).